A 208-amino-acid chain; its full sequence is Thymidylate kinase (208 aa).

An ATP-binding site is contributed by 10 to 17 (GGEGVGKS).

The protein belongs to the thymidylate kinase family.

It catalyses the reaction dTMP + ATP = dTDP + ADP. Functionally, phosphorylation of dTMP to form dTDP in both de novo and salvage pathways of dTTP synthesis. The protein is Thymidylate kinase of Rhizorhabdus wittichii (strain DSM 6014 / CCUG 31198 / JCM 15750 / NBRC 105917 / EY 4224 / RW1) (Sphingomonas wittichii).